The following is a 463-amino-acid chain: Oxidoreductase OXR1 (463 aa).

6-hydroxy-FAD contacts are provided by residues 59-63 (GGSYS), valine 154, and aspartate 366.

The protein belongs to the FAD-dependent oxidoreductase family. 6-hydroxy-FAD serves as cofactor.

The protein operates within siderophore biosynthesis. Functionally, oxidoreductase; part of the gene cluster that mediates the biosynthesis of hydroxamate-containing siderophores that play a critical role in virulence via intracellular iron acquisition during macrophage infection. The polypeptide is Oxidoreductase OXR1 (Ajellomyces capsulatus (Darling's disease fungus)).